Here is a 454-residue protein sequence, read N- to C-terminus: Gustatory and odorant receptor 21a (454 aa).

Residues 1–114 (MTFLDRTMSF…LPRTGYSWGS (114 aa)) lie on the Cytoplasmic side of the membrane. The helical transmembrane segment at 115–135 (KQVMWAIFIYSCQTTIVVLVL) threads the bilayer. The Extracellular portion of the chain corresponds to 136–153 (RERVKKFVTSPDKRFDEA). The helical transmembrane segment at 154 to 174 (IYNVIFISLLFTNFLLPVASW) threads the bilayer. Topologically, residues 175 to 206 (RHGPQVAIFKNMWTNYQYKFFKTTGSPIVFPN) are cytoplasmic. The chain crosses the membrane as a helical span at residues 207 to 227 (LYPLTWSLCVFSWLLSIAINL). Residues 228-237 (SQYFLQPDFR) are Extracellular-facing. The helical transmembrane segment at 238 to 258 (LWYTFAYYPIIAMLNCFCSLW) threads the bilayer. Residues 259-312 (YINCNAFGTASRALSDALQTTIRGEKPAQKLTEYRHLWVDLSHMMQQLGRAYSN) lie on the Cytoplasmic side of the membrane. Residues 313 to 333 (MYGMYCLVIFFTTIIATYGSI) form a helical membrane-spanning segment. At 334–345 (SEIIDHGATYKE) the chain is on the extracellular side. Residues 346–366 (VGLFVIVFYCMGLLYIICNEA) traverse the membrane as a helical segment. At 367–422 (HYASRKVGLDFQTKLLNINLTAVDAATQKEVEMLLVAINKNPPIMNLDGYANINRE) the chain is on the cytoplasmic side. The chain crosses the membrane as a helical span at residues 423-443 (LITTNISFMATYLVVLLQFKI). Topologically, residues 444-454 (TEQRRIGQQQA) are extracellular.

The protein belongs to the insect chemoreceptor superfamily. Gustatory receptor (GR) family. Gr21a subfamily. As to quaternary structure, gr21a and Gr63a probably form a heterodimer that responds to CO(2). Expressed in the adult labellar chemosensory neurons. Carbon dioxide-responsive neurons coexpress Gr21a and Gr63a in a pair of chemosensory receptors at both larval and adult life stages. A single bilateral neuron, expressing the Gr21a receptor, is responsible for CO(2) detection in larvae.

The protein resides in the cell membrane. Gustatory and odorant receptor which mediates acceptance or avoidance behavior, depending on its substrates. Gr21a and Gr63a together are sufficient for carbon dioxide detection and avoidance behavior. It is possible that the CO(2) receptors Gr63a and Gr21a activate the TRPC channels through Galpha49B and Plc21C. This innate olfactory avoidance behavior can be inhibited by inhibitory interactions of the odors such as 1-hexanol and 2,3-butanedione with Gr21a and Gr63a. The chain is Gustatory and odorant receptor 21a (Gr21a) from Drosophila melanogaster (Fruit fly).